A 288-amino-acid chain; its full sequence is Anthranilate synthase beta subunit 1, chloroplastic (288 aa).

The N-terminal 58 residues, 1-58, are a transit peptide targeting the chloroplast; the sequence is MACSHLAAAAAAASPAAARSPAASSAATASAFARLSATPRVASGGLAVRGQRGVAAVV. Positions 83–282 constitute a Glutamine amidotransferase type-1 domain; sequence PIIVIDNYDS…VRFIEELEKQ (200 aa). 134 to 136 is an L-glutamine binding site; sequence GPG. Catalysis depends on Cys161, which acts as the Nucleophile. L-glutamine is bound by residues Gln165 and 215 to 216; that span reads SL. Active-site residues include His256 and Glu258.

As to quaternary structure, heterotetramer consisting of two non-identical subunits: a beta subunit and a large alpha subunit. Expressed in roots and leaves.

It localises to the plastid. The protein localises to the chloroplast. The enzyme catalyses chorismate + L-glutamine = anthranilate + pyruvate + L-glutamate + H(+). It functions in the pathway amino-acid biosynthesis; L-tryptophan biosynthesis; L-tryptophan from chorismate: step 1/5. Its function is as follows. Part of a heterotetrameric complex that catalyzes the two-step biosynthesis of anthranilate, an intermediate in the biosynthesis of L-tryptophan. In the first step, the glutamine-binding beta subunit of anthranilate synthase (AS) provides the glutamine amidotransferase activity which generates ammonia as a substrate that, along with chorismate, is used in the second step, catalyzed by the large alpha subunit of AS to produce anthranilate. The protein is Anthranilate synthase beta subunit 1, chloroplastic of Oryza sativa subsp. japonica (Rice).